The chain runs to 459 residues: Chaperone SurA (459 aa).

Residues 1-23 (MNHRLVALSVASLALLAPLTVPA) form the signal peptide. 2 PpiC domains span residues 197–301 (VQQI…KVLE) and 312–411 (VTQS…QLME).

It is found in the periplasm. It carries out the reaction [protein]-peptidylproline (omega=180) = [protein]-peptidylproline (omega=0). Its function is as follows. Chaperone involved in the correct folding and assembly of outer membrane proteins. Recognizes specific patterns of aromatic residues and the orientation of their side chains, which are found more frequently in integral outer membrane proteins. May act in both early periplasmic and late outer membrane-associated steps of protein maturation. This is Chaperone SurA from Albidiferax ferrireducens (strain ATCC BAA-621 / DSM 15236 / T118) (Rhodoferax ferrireducens).